Reading from the N-terminus, the 239-residue chain is 1-(5-phosphoribosyl)-5-[(5-phosphoribosylamino)methylideneamino] imidazole-4-carboxamide isomerase (239 aa).

Asp-8 functions as the Proton acceptor in the catalytic mechanism. Asp-129 functions as the Proton donor in the catalytic mechanism.

This sequence belongs to the HisA/HisF family.

Its subcellular location is the cytoplasm. The catalysed reaction is 1-(5-phospho-beta-D-ribosyl)-5-[(5-phospho-beta-D-ribosylamino)methylideneamino]imidazole-4-carboxamide = 5-[(5-phospho-1-deoxy-D-ribulos-1-ylimino)methylamino]-1-(5-phospho-beta-D-ribosyl)imidazole-4-carboxamide. It functions in the pathway amino-acid biosynthesis; L-histidine biosynthesis; L-histidine from 5-phospho-alpha-D-ribose 1-diphosphate: step 4/9. The sequence is that of 1-(5-phosphoribosyl)-5-[(5-phosphoribosylamino)methylideneamino] imidazole-4-carboxamide isomerase from Bacillus mycoides (strain KBAB4) (Bacillus weihenstephanensis).